The following is an 800-amino-acid chain: Internalin A (800 aa).

Positions 1–35 (MRKKRYVWLKSILVAILVFGSGVWINTSNGTNAQA) are cleaved as a signal peptide. The region spanning 36–76 (ATITQDTPINQIFTDTALAEKMKTVLGKTNVTDTVSQTDLD) is the LRRNT domain. LRR repeat units follow at residues 77–98 (QVTT…EYLN), 99–120 (NLTQ…KNLT), 121–142 (KLVD…ANLT), 143–164 (NLTG…KNLT), 165–186 (NLNR…SGLT), 187–207 (SLQQ…ANLT), 208–229 (TLER…AKLT), 230–251 (NLES…GILT), 252–273 (NLDE…ASLT), 274–295 (NLTD…SGLT), 296–317 (KLTE…AGLT), 318–339 (ALTN…SNLK), 340–361 (NLTY…SSLT), 362–383 (KLQR…ANLT), and 384–405 (NINW…ANLT). The LRRCT domain maps to 416-505 (AWTNAPVNYK…AIFNVKFHVD (90 aa)). One copy of the B-1 repeat lies at 518-587 (LLTEPAKPVK…TTSQTVDYQG (70 aa)). A 3 X approximate tandem repeats, type B region spans residues 518–706 (LLTEPAKPVK…ITLYAQFTKN (189 aa)). A B-2 repeat occupies 588 to 657 (LLQEPTAPTK…STTQAVDYQG (70 aa)). The B-3 repeat unit spans residues 658–706 (LLKEPKAPTKAGYTFKGWYDEKTDGKKWDFATDKMPANDITLYAQFTKN). Positions 705–757 (KNPVAPPTTGGNTPPTTNNGGNTTPPSANIPGSDTSNTSTGNSASTTSTMNAY) are disordered. Positions 711–753 (PTTGGNTPPTTNNGGNTTPPSANIPGSDTSNTSTGNSASTTST) are enriched in low complexity. An LPXTG sorting signal motif is present at residues 767 to 771 (LPTTG). Position 770 is a pentaglycyl murein peptidoglycan amidated threonine (T770). Positions 771-800 (GDSDNALYLLLGLLAVGTAMALTKKARASK) are cleaved as a propeptide — removed by sortase A.

It belongs to the internalin family. As to quaternary structure, interacts with host (human) cadherin-1 (CDH1). The formation of the complex between inlA and cadherin-1 is calcium-dependent. Mutagenesis studies show it is possible to increase the affinity of InlA for CDH1 by rational engineering of InlA residues.

It is found in the secreted. The protein localises to the cell wall. With respect to regulation, bacterial uptake is inhibited by EDTA and by anti-E-cadherin antibodies. In terms of biological role, mediates the entry of L.monocytogenes into host intestinal epithelial cells; transformation with inlA alone allows L.innocua (a non-invasive species) to be taken up by host cells. Binds to human receptor cadherin-1 (E-cadherin, CDH1); the chicken homolog of cadherin-1 but not cadherin-2 function as receptors. Mouse cadherin-1 is not a receptor, however mutating a single surface-exposed residue (Glu-172 to Pro in mouse) allows cadherin-1 to act as a receptor for InlA. The polypeptide is Internalin A (Listeria monocytogenes serovar 1/2a (strain ATCC BAA-679 / EGD-e)).